The primary structure comprises 148 residues: MKISVFNGPNLNALGTREPGIYGADTLADIEAACRTTAADLGVDLDFLQTNQEGALVDAFHAARDTSDGVVINAGAYTHTSIALRDAISATELPTVELHLSNTHAREAFRHHSMIAPVCVGLILGFGAYGYPLAVTALVQHLKQGNAP.

Tyr22 (proton acceptor) is an active-site residue. Positions 73, 79, and 86 each coordinate substrate. The active-site Proton donor is the His99. Substrate contacts are provided by residues 100–101 (LS) and Arg110.

This sequence belongs to the type-II 3-dehydroquinase family. As to quaternary structure, homododecamer.

It carries out the reaction 3-dehydroquinate = 3-dehydroshikimate + H2O. It functions in the pathway metabolic intermediate biosynthesis; chorismate biosynthesis; chorismate from D-erythrose 4-phosphate and phosphoenolpyruvate: step 3/7. Its function is as follows. Catalyzes a trans-dehydration via an enolate intermediate. This chain is 3-dehydroquinate dehydratase, found in Jannaschia sp. (strain CCS1).